The primary structure comprises 157 residues: DNA gyrase inhibitor (157 aa).

Belongs to the DNA gyrase inhibitor family. As to quaternary structure, interacts with DNA gyrase.

Its subcellular location is the cytoplasm. Its function is as follows. Inhibits the supercoiling activity of DNA gyrase. Acts by inhibiting DNA gyrase at an early step, prior to (or at the step of) binding of DNA by the gyrase. It protects cells against toxins that target DNA gyrase, by inhibiting activity of these toxins and reducing the formation of lethal double-strand breaks in the cell. In Cronobacter sakazakii (strain ATCC BAA-894) (Enterobacter sakazakii), this protein is DNA gyrase inhibitor.